A 1499-amino-acid polypeptide reads, in one-letter code: Rho GTPase-activating protein 35 (1499 aa).

Residues 1 to 266 are has GTPase activity, required for proper localization; sequence MMMARKQDVR…IPYFEALKQQ (266 aa). GTP is bound by residues lysine 28, 33–37, leucine 52, serine 56, 95–97, 201–203, and 229–231; these read IGKSC, EQT, KCD, and SAR. 4 consecutive FF domains span residues 270-327, 368-422, 429-483, and 485-550; these read IATA…HIHR, KLLE…HLEK, RAEM…HQKQ, and IDRA…HIHF. Tyrosine 308 is modified (phosphotyrosine). Serine 589 carries the phosphoserine modification. In terms of domain architecture, pG1 pseudoGTPase spans 592–767; sequence DPNIDRINLV…LLDSKRNLNL (176 aa). Phosphoserine is present on residues serine 770 and serine 773. One can recognise a pG2 pseudoGTPase domain in the interval 783–947; it reads RIVMCLMCGD…FKDVVEKKNI (165 aa). Phosphoserine is present on residues serine 970, serine 975, serine 985, and serine 1072. Residue tyrosine 1087 is modified to Phosphotyrosine. Residue tyrosine 1105 is modified to Phosphotyrosine; by ABL2 and PTK6. Residues 1124–1141 are compositionally biased toward polar residues; it reads KAQSNGSGNGSDSEMDTS. The interval 1124 to 1148 is disordered; that stretch reads KAQSNGSGNGSDSEMDTSSLERGRK. Serine 1134, serine 1142, serine 1150, serine 1176, serine 1179, and serine 1221 each carry phosphoserine. Residues 1177–1207 form a disordered region; it reads VGSDDELGPIRKKEEDQASQGYKGDNAVIPY. The segment at 1213–1236 is required for phospholipid binding and regulation of the substrate preference; sequence PRRRNILRSLRRNTKKPKPKPRPS. Phosphothreonine is present on threonine 1226. The residue at position 1236 (serine 1236) is a Phosphoserine. Residues 1249-1436 enclose the Rho-GAP domain; that stretch reads VPLTTVVTPE…LFIQQCPFFF (188 aa). Residues 1446-1499 are disordered; sequence GAAPGSPSAMAPTVPFLTSTPATSQPSPPQSPPPTPQSPMQPLLSSQLQAEHTL. Positions 1448-1470 are enriched in low complexity; the sequence is APGSPSAMAPTVPFLTSTPATSQ. Pro residues predominate over residues 1471-1484; the sequence is PSPPQSPPPTPQSP. 2 positions are modified to phosphoserine: serine 1472 and serine 1476. Position 1480 is a phosphothreonine (threonine 1480). Serine 1483 carries the phosphoserine modification. Over residues 1485–1499 the composition is skewed to low complexity; it reads MQPLLSSQLQAEHTL.

Interacts with RASA1. Interacts with the general transcription factor GTF2I, the interaction sequesters GTF2I in the cytoplasm. Phosphorylation of Tyr-1105 by PTK6 promotes the association with RASA1, inactivating RHOA while activating RAS. Phosphorylation at Tyr-308 by PDGFRA inhibits binding to GTF2I. Phosphorylated by PRKCA at Ser-1221 and Thr-1226, induces relocalization from the cytoplasm to regions of plasma membrane ruffling and prevents the binding and substrate specificity regulation by phospholipids. In brain, phosphorylated by FYN and SRC. During focal adhesion formation, phosphorylated by MAPK1 and MAPK3 at the C-terminal region, probably at Ser-1451, Ser-1476, Thr-1480 and Ser-1483. Phosphorylation by MAPK1 and MAPK3 inhibits GAP function and localizes ARGHAP35 away from newly forming focal adhesions and stress fibers in cells spreading on fibronectin. Phosphorylation at Ser-1476 and Thr-1480 by GSK3B requires priming by MAPK and inhibits RhoGAP activity and modulates polarized cell migration. As to expression, ubiquitously expressed.

It localises to the cytoplasm. The protein resides in the cytoskeleton. Its subcellular location is the cilium basal body. The protein localises to the nucleus. It is found in the cell membrane. Functionally, rho GTPase-activating protein (GAP). Binds several acidic phospholipids which inhibits the Rho GAP activity to promote the Rac GAP activity. This binding is inhibited by phosphorylation by PRKCA. Involved in cell differentiation as well as cell adhesion and migration, plays an important role in retinal tissue morphogenesis, neural tube fusion, midline fusion of the cerebral hemispheres and mammary gland branching morphogenesis. Transduces signals from p21-ras to the nucleus, acting via the ras GTPase-activating protein (GAP). Transduces SRC-dependent signals from cell-surface adhesion molecules, such as laminin, to promote neurite outgrowth. Regulates axon outgrowth, guidance and fasciculation. Modulates Rho GTPase-dependent F-actin polymerization, organization and assembly, is involved in polarized cell migration and in the positive regulation of ciliogenesis and cilia elongation. During mammary gland development, is required in both the epithelial and stromal compartments for ductal outgrowth. Represses transcription of the glucocorticoid receptor by binding to the cis-acting regulatory sequence 5'-GAGAAAAGAAACTGGAGAAACTC-3'; this function is however unclear and would need additional experimental evidences. This chain is Rho GTPase-activating protein 35, found in Rattus norvegicus (Rat).